The following is a 381-amino-acid chain: 1-deoxy-D-xylulose 5-phosphate reductoisomerase (381 aa).

Positions 13, 14, 15, 40, and 114 each coordinate NADPH. Residue K115 coordinates 1-deoxy-D-xylulose 5-phosphate. An NADPH-binding site is contributed by E116. A Mn(2+)-binding site is contributed by D140. Residues S141, E142, S166, and H189 each contribute to the 1-deoxy-D-xylulose 5-phosphate site. Mn(2+) is bound at residue E142. NADPH is bound at residue G195. The 1-deoxy-D-xylulose 5-phosphate site is built by S202, N207, K208, and E211. E211 lines the Mn(2+) pocket.

This sequence belongs to the DXR family. Requires Mg(2+) as cofactor. Mn(2+) is required as a cofactor.

It carries out the reaction 2-C-methyl-D-erythritol 4-phosphate + NADP(+) = 1-deoxy-D-xylulose 5-phosphate + NADPH + H(+). It functions in the pathway isoprenoid biosynthesis; isopentenyl diphosphate biosynthesis via DXP pathway; isopentenyl diphosphate from 1-deoxy-D-xylulose 5-phosphate: step 1/6. Catalyzes the NADPH-dependent rearrangement and reduction of 1-deoxy-D-xylulose-5-phosphate (DXP) to 2-C-methyl-D-erythritol 4-phosphate (MEP). The chain is 1-deoxy-D-xylulose 5-phosphate reductoisomerase from Treponema denticola (strain ATCC 35405 / DSM 14222 / CIP 103919 / JCM 8153 / KCTC 15104).